The chain runs to 287 residues: Elongation factor Ts (287 aa).

Residues 80-83 form an involved in Mg(2+) ion dislocation from EF-Tu region; it reads TDFL.

This sequence belongs to the EF-Ts family.

It is found in the cytoplasm. In terms of biological role, associates with the EF-Tu.GDP complex and induces the exchange of GDP to GTP. It remains bound to the aminoacyl-tRNA.EF-Tu.GTP complex up to the GTP hydrolysis stage on the ribosome. This chain is Elongation factor Ts, found in Pseudomonas fluorescens (strain SBW25).